A 95-amino-acid polypeptide reads, in one-letter code: Small ribosomal subunit protein bS6 (95 aa).

It belongs to the bacterial ribosomal protein bS6 family.

Its function is as follows. Binds together with bS18 to 16S ribosomal RNA. In Corynebacterium diphtheriae (strain ATCC 700971 / NCTC 13129 / Biotype gravis), this protein is Small ribosomal subunit protein bS6.